Consider the following 208-residue polypeptide: Holliday junction resolvase RecU (208 aa).

The segment at 1-28 (MNYPNGKPYSKNKPLDGRKSSPFSSNIE) is disordered. Mg(2+) is bound by residues Thr87, Asp89, Glu102, and Gln121.

Belongs to the RecU family. It depends on Mg(2+) as a cofactor.

Its subcellular location is the cytoplasm. It carries out the reaction Endonucleolytic cleavage at a junction such as a reciprocal single-stranded crossover between two homologous DNA duplexes (Holliday junction).. Endonuclease that resolves Holliday junction intermediates in genetic recombination. Cleaves mobile four-strand junctions by introducing symmetrical nicks in paired strands. Promotes annealing of linear ssDNA with homologous dsDNA. Required for DNA repair, homologous recombination and chromosome segregation. In Staphylococcus epidermidis (strain ATCC 12228 / FDA PCI 1200), this protein is Holliday junction resolvase RecU.